The chain runs to 424 residues: Caspase-2 (424 aa).

Residues 1–140 (MLGACGMQRY…IVEHSLDSGD (140 aa)) constitute a propeptide that is removed on maturation. The region spanning 7–96 (MQRYHQEALK…QHLAEMILKT (90 aa)) is the CARD domain. Residues His-248 and Cys-291 contribute to the active site. Residues 296-310 (TDRGVDQRDGKERSD) are compositionally biased toward basic and acidic residues. Positions 296 to 325 (TDRGVDQRDGKERSDSPGCEESDANKEENL) are disordered.

The protein belongs to the peptidase C14A family. In terms of assembly, heterotetramer that consists of two anti-parallel arranged heterodimers, each one formed by a p18 subunit and a p12 subunit.

It carries out the reaction Strict requirement for an Asp residue at P1, with 316-Asp being essential for proteolytic activity and has a preferred cleavage sequence of Val-Asp-Val-Ala-Asp-|-.. Its function is as follows. Involved in the activation cascade of caspases responsible for apoptosis execution. Might function by either activating some proteins required for cell death or inactivating proteins necessary for cell survival. The sequence is that of Caspase-2 (CASP2) from Gallus gallus (Chicken).